A 264-amino-acid polypeptide reads, in one-letter code: MRVALGVEYNGARYSGWQRQSHVNSVQQEVETALSRICNHPVAIVCAGRTDAGVHGTGQVVHFDTDAPRDMVAFTLGMNTLLPKDIAIRFAQPVADDFHARFSATARRYRYVIYNNPLRGAVLNEGVTHFHHTLDETKMQEACQYLIGKYDFTSFRAIHCQANTAIRTIQHLSVQRQGSYVIIDIKANAFLHHMVRNITGCLMDIGLHKQQPVWLKELLDLKERAKASATAKAAGLYLVDVDYPEQFNIPKTPLGPLFLPDISI.

D51 acts as the Nucleophile in catalysis. Y109 lines the substrate pocket.

It belongs to the tRNA pseudouridine synthase TruA family. As to quaternary structure, homodimer.

It carries out the reaction uridine(38/39/40) in tRNA = pseudouridine(38/39/40) in tRNA. Formation of pseudouridine at positions 38, 39 and 40 in the anticodon stem and loop of transfer RNAs. The sequence is that of tRNA pseudouridine synthase A from Pseudoalteromonas translucida (strain TAC 125).